A 275-amino-acid polypeptide reads, in one-letter code: L-aspartate dehydrogenase (275 aa).

NAD(+) contacts are provided by A130 and N196. H226 is a catalytic residue.

It belongs to the L-aspartate dehydrogenase family.

The catalysed reaction is L-aspartate + NADP(+) + H2O = oxaloacetate + NH4(+) + NADPH + H(+). The enzyme catalyses L-aspartate + NAD(+) + H2O = oxaloacetate + NH4(+) + NADH + H(+). The protein operates within cofactor biosynthesis; NAD(+) biosynthesis; iminoaspartate from L-aspartate (dehydrogenase route): step 1/1. Specifically catalyzes the NAD or NADP-dependent dehydrogenation of L-aspartate to iminoaspartate. The polypeptide is L-aspartate dehydrogenase (Ruegeria pomeroyi (strain ATCC 700808 / DSM 15171 / DSS-3) (Silicibacter pomeroyi)).